The primary structure comprises 177 residues: Protein SPMIP1 (177 aa).

The tract at residues 47 to 80 (SRLPRKLPTLLPQASVAPPPPASKTTPSKAPSPA) is disordered.

The chain is Protein SPMIP1 (Spmip1) from Mus musculus (Mouse).